The primary structure comprises 602 residues: uncharacterized protein (602 aa).

The 202-residue stretch at 271-472 (IIDILADILI…RDEEVAKYIF (202 aa)) folds into the MCM domain. An ATP-binding site is contributed by 315–322 (TEVGIDKT).

Belongs to the MCM family.

This is an uncharacterized protein from Methanocaldococcus jannaschii (strain ATCC 43067 / DSM 2661 / JAL-1 / JCM 10045 / NBRC 100440) (Methanococcus jannaschii).